Consider the following 364-residue polypeptide: Pre-mRNA-splicing factor SLT11 (364 aa).

The segment at 331–364 (KSTDNAKNDKKKTSKKVHKDRSKKSKPRANKLTI) is disordered. Over residues 339-364 (DKKKTSKKVHKDRSKKSKPRANKLTI) the composition is skewed to basic residues.

The protein belongs to the SLT11 family. Belongs to the CWC complex (or CEF1-associated complex), a spliceosome subcomplex composed of the U2, U5 and U6 snRNAs and at least BUD13, BUD31, BRR2, CDC40, CEF1, CLF1, CUS1, CWC2, CWC15, CWC21, CWC22, CWC23, CWC24, CWC25, CWC27, ECM2, HSH155, IST3, ISY1, LEA1, MSL1, NTC20, PRP8, PRP9, PRP11, PRP19, PRP21, PRP22, PRP45, PRP46, SLU7, SMB1, SMD1, SMD2, SMD3, SMX2, SMX3, SNT309, SNU114, SPP2, SYF1, SYF2, RSE1 and YJU2. Interacts with SLU7.

It localises to the nucleus. In terms of biological role, involved in pre-mRNA splicing. Facilitates the cooperative formation of U2/U6 helix II in association with stem II in the spliceosome. Binds to RNA. This chain is Pre-mRNA-splicing factor SLT11 (ECM2), found in Saccharomyces cerevisiae (strain ATCC 204508 / S288c) (Baker's yeast).